We begin with the raw amino-acid sequence, 328 residues long: Tetraacyldisaccharide 4'-kinase (328 aa).

Threonine 59–threonine 66 is an ATP binding site.

The protein belongs to the LpxK family.

It catalyses the reaction a lipid A disaccharide + ATP = a lipid IVA + ADP + H(+). The protein operates within glycolipid biosynthesis; lipid IV(A) biosynthesis; lipid IV(A) from (3R)-3-hydroxytetradecanoyl-[acyl-carrier-protein] and UDP-N-acetyl-alpha-D-glucosamine: step 6/6. In terms of biological role, transfers the gamma-phosphate of ATP to the 4'-position of a tetraacyldisaccharide 1-phosphate intermediate (termed DS-1-P) to form tetraacyldisaccharide 1,4'-bis-phosphate (lipid IVA). The polypeptide is Tetraacyldisaccharide 4'-kinase (Aliivibrio fischeri (strain MJ11) (Vibrio fischeri)).